A 252-amino-acid polypeptide reads, in one-letter code: Phosphonates import ATP-binding protein PhnC 1 (252 aa).

The 243-residue stretch at 2–244 folds into the ABC transporter domain; sequence ISLNKLGVTY…QLEEIYQTLS (243 aa). 35-42 lines the ATP pocket; it reads GSSGAGKS.

Belongs to the ABC transporter superfamily. Phosphonates importer (TC 3.A.1.9.1) family. As to quaternary structure, the complex is composed of two ATP-binding proteins (PhnC), two transmembrane proteins (PhnE) and a solute-binding protein (PhnD).

It localises to the cell inner membrane. The catalysed reaction is phosphonate(out) + ATP + H2O = phosphonate(in) + ADP + phosphate + H(+). In terms of biological role, part of the ABC transporter complex PhnCDE involved in phosphonates import. Responsible for energy coupling to the transport system. The sequence is that of Phosphonates import ATP-binding protein PhnC 1 from Trichodesmium erythraeum (strain IMS101).